Reading from the N-terminus, the 8797-residue chain is MATSRGASRCPRDIANVMQRLQDEQEIVQKRTFTKWINSHLAKRKPPMVVDDLFEDMKDGVKLLALLEVLSGQKLPCEQGRRMKRIHAVANIGTALKFLEGRKIKLVNINSTDIADGRPSIVLGLMWTIILYFQIEELTSNLPQLQSLSSSASSVDSIVSSETPSPPSKRKVTTKIQGNAKKALLKWVQYTAGKQTGIEVKDFGKSWRSGVAFHSVIHAIRPELVDLETVKGRSNRENLEDAFTIAETELGIPRLLDPEDVDVDKPDEKSIMTYVAQFLKHYPDIHNASTDGQEDDEILPGFPSFANSVQNFKREDRVIFKEMKVWIEQFERDLTRAQMVESNLQDKYQSFKHFRVQYEMKRKQIEHLIQPLHRDGKLSLDQALVKQSWDRVTSRLFDWHIQLDKSLPAPLGTIGAWLYRAEVALREEITVQQVHEETANTIQRKLEQHKDLLQNTDAHKRAFHEIYRTRSVNGIPVPPDQLEDMAERFHFVSSTSELHLMKMEFLELKYRLLSLLVLAESKLKSWIIKYGRRESVEQLLQNYVSFIENSKFFEQYEVTYQILKQTAEMYVKADGSVEEAENVMKFMNETTAQWRNLSVEVRSVRSMLEEVISNWDRYGNTVASLQAWLEDAEKMLNQSENAKKDFFRNLPHWIQQHTAMNDAGNFLIETCDEMVSRDLKQQLLLLNGRWRELFMEVKQYAQADEMDRMKKEYTDCVVTLSAFATEAHKKLSEPLEVSFMNVKLLIQDLEDIEQRVPVMDAQYKIITKTAHLITKESPQEEGKEMFATMSKLKEQLTKVKECYSPLLYESQQLLIPLEELEKQMTSFYDSLGKINEIITVLEREAQSSALFKQKHQELLACQENCKKTLTLIEKGSQSVQKFVTLSNVLKHFDQTRLQRQIADIHVAFQSMVKKTGDWKKHVETNSRLMKKFEESRAELEKVLRIAQEGLEEKGDPEELLRRHTEFFSQLDQRVLNAFLKACDELTDILPEQEQQGLQEAVRKLHKQWKDLQGEAPYHLLHLKIDVEKNRFLASVEECRTELDRETKLMPQEGSEKIIKEHRVFFSDKGPHHLCEKRLQLIEELCVKLPVRDPVRDTPGTCHVTLKELRAAIDSTYRKLMEDPDKWKDYTSRFSEFSSWISTNETQLKGIKGEAIDTANHGEVKRAVEEIRNGVTKRGETLSWLKSRLKVLTEVSSENEAQKQGDELAKLSSSFKALVTLLSEVEKMLSNFGDCVQYKEIVKNSLEELISGSKEVQEQAEKILDTENLFEAQQLLLHHQQKTKRISAKKRDVQQQIAQAQQGEGGLPDRGHEELRKLESTLDGLERSRERQERRIQVTLRKWERFETNKETVVRYLFQTGSSHERFLSFSSLESLSSELEQTKEFSKRTESIAVQAENLVKEASEIPLGPQNKQLLQQQAKSIKEQVKKLEDTLEEDIKTMEMVKTKWDHFGSNFETLSVWITEKEKELNALETSSSAMDMQISQIKVTIQEIESKLSSIVGLEEEAQSFAQFVTTGESARIKAKLTQIRRYGEELREHAQCLEGTILGHLSQQQKFEENLRKIQQSVSEFEDKLAVPIKICSSATETYKVLQEHMDLCQALESLSSAITAFSASARKVVNRDSCVQEAAALQQQYEDILRRAKERQTALENLLAHWQRLEKELSSFLTWLERGEAKASSPEMDISADRVKVEGELQLIQALQNEVVSQASFYSKLLQLKESLFSVASKDDVKMMKLHLEQLDERWRDLPQIINKRINFLQSVVAEHQQFDELLLSFSVWIKLFLSELQTTSEISIMDHQVALTRHKDHAAEVESKKGELQSLQGHLAKLGSLGRAEDLHLLQGKAEDCFQLFEEASQVVERRQLALSHLAEFLQSHASLSGILRQLRQTVEATNSMNKNESDLIEKDLNDALQNAKALESAAVSLDGILSKAQYHLKIGSSEQRTSCRATADQLCGEVERIQNLLGTKQSEADALAVLKKAFQDQKEELLKSIEDIEERTDKERLKEPTRQALQQRLRVFNQLEDELNSHEHELCWLKDKAKQIAQKDVAFAPEVDREINRLEVTWDDTKRLIHENQGQCCGLIDLMREYQNLKSAVSKVLENASSVIVTRTTIKDQEDLKWAFSKHETAKNKMNYKQKDLDNFTSKGKHLLSELKKIHSSDFSLVKTDMESTVDKWLDVSEKLEENMDRLRVSLSIWDDVLSTRDEIEGWSNNCVPQMAENISNLDNHLRAEELLKEFESEVKNKALRLEELHSKVNDLKELTKNLETPPDLQFIEADLMQKLEHAKEITEVAKGTLKDFTAQSTQVEKFINDITTWFTKVEESLMNCAQNETCEALKKVKDIQKELQSQQSNISSTQENLNSLCRKYHSAELESLGRAMTGLIKKHEAVSQLCSKTQASLQESLEKHFSESMQEFQEWFLGAKAAAKESSDRTGDSKVLEAKLHDLQNILDSVSDGQSKLDAVTQEGQTLYAHLSKQIVSSIQEQITKANEEFQAFLKQCLKDKQALQDCASELGSFEDQHRKLNLWIHEMEERFNTENLGESKQHIPEKKNEVHKVEMFLGELLAARESLDKLSQRGQLLSEEGHGAGQEGRLCSQLLTSHQNLLRMTKEKLRSCQVALQEHEALEEALQSMWFWVKAIQDRLACAESTLGSKDTLEKRLSQIQDILLMKGEGEVKLNMAIGKGEQALRSSNKEGQRVIQTQLETLKEVWADIMSSSVHAQSTLESVISQWNDYVERKNQLEQWMESVDQKIEHPLQPQPGLKEKFVLLDHLQSILSEAEDHTRALHRLIAKSRELYEKTEDESFKDTAQEELKTQFNDIMTVAKEKMRKVEEIVKDHLMYLDAVHEFTDWLHSAKEELHRWSDMSGDSSATQKKLSKIKELIDSREIGASRLSRVESLAPEVKQNTTASGCELMHTEMQALRADWKQWEDSVFQTQSCLENLVSQMALSEQEFSGQVAQLEQALEQFSALLKTWAQQLTLLEGKNTDEEIVECWHKGQEILDALQKAEPRTEDLKSQLNELCRFSRDLSTYSGKVSGLIKEYNCLCLQASKGCQNKEQILQQRFRKAFRDFQQWLVNAKITTAKCFDIPQNISEVSTSLQKIQEFLSESENGQHKLNMMLSKGELLSTLLTKEKAKGIQAKVTAAKEDWKNFHSNLHQKESALENLKIQMKDFEVSAEPIQDWLSKTEKMVHESSNRLYDLPAKRREQQKLQSVLEEIHCYEPQLNRLKEKAQQLWEGQAASKSFRHRVSQLSSQYLALSNLTKEKVSRLDRIVAEHNQFSLGIKELQDWMTDAIHMLDSYCHPTSDKSVLDSRTLKLEALLSVKQEKEIQMKMIVTRGESVLQNTSPEGIPTIQQQLQSVKDMWASLLSAGIRCKSQLEGALSKWTSYQDGVRQFSGWMDSMEANLNESERQHAELRDKTTMLGKAKLLNEEVLSYSSLLETIEVKGAGMTEHYVTQLELQDLQERYRAIQERAKEAVTKSEKLVRLHQEYQRDLKAFEVWLGQEQEKLDQYSVLEGDAHTHETTLRDLQELQVHCAEGQALLNSVLHTREDVIPSGIPQAEDRALESLRQDWQAYQHRLSETRTQFNNVVNKLRLMEQKFQQVDEWLKTAEEKVSPRTRRQSNRATKEIQLHQMKKWHEEVTAYRDEVEEVGARAQEILDESHVNSRMGCQATQLTSRYQALLLQVLEQIKFLEEEIQSLEESESSLSSYSDWYGSTHKNFKNVATKIDKVDTVMMGKKLKTLEVLLKDMEKGHSLLKSAREKGERAVKYLEEGEAERLRKEIHDHMEQLKELTSTVRKEHMTLEKGLHLAKEFSDKCKALTQWIAEYQEILHVPEEPKMELYEKKAQLSKYKSLQQTVLSHEPSVKSVREKGEALLELVQDVTLKDKIDQLQSDYQDLCSIGKEHVFSLEAKVKDHEDYNSELQEVEKWLLQMSGRLVAPDLLETSSLETITQQLAHHKAMMEEIAGFEDRLNNLQMKGDTLIGQCADHLQAKLKQNVHAHLQGTKDSYSAICSTAQRMYQSLEHELQKHVSRQDTLQQCQAWLSAVQPDLEPSPQPPLSRAEAIKQVKHFRALQEQARTYLDLLCSMCDLSNASVKTTAKDIQQTEQTIEQKLVQAQNLTQGWEEIKHLKSELWIYLQDADQQLQNMKRRHSELELNIAQNMVSQVKDFVKKLQSKQASVNTIIEKVNKLTKKEESPEHKEINHLNDQWLDLCRQSNNLCLQREEDLQRTRDYHDCMNVVEVFLEKFTTEWDNLARSDAESTAVHLEALKKLALALQERKYAIEDLKDQKQKMIEHLNLDDKELVKEQTSHLEQRWFQLEDLIKRKIQVSVTNLEELNVVQSRFQELMEWAEEQQPNIAEALKQSPPPDMAQNLLMDHLAICSELEAKQMLLKSLIKDADRVMADLGLNERQVIQKALSDAQSHVNCLSDLVGQRRKYLNKALSEKTQFLMAVFQATSQIQQHERKIMFREHICLLPDDVSKQVKTCKSAQASLKTYQNEVTGLWAQGRELMKEVTEQEKSEVLGKLQELQSVYDSVLQKCSHRLQELEKNLVSRKHFKEDFDKACHWLKQADIVTFPEINLMNESSELHTQLAKYQNILEQSPEYENLLLTLQRTGQTILPSLNEVDHSYLSEKLNALPRQFNVIVALAKDKFYKVQEAILARKEYASLIELTTQSLSELEAQFLRMSKVPTDLAVEEALSLQDGCRAILDEVAGLGEAVDELNQKKEGFRSTGQPWQPDKMLHLVTLYHRLKRQTEQRVSLLEDTTSAYQEHEKMCQQLERQLKSVKEEQSKVNEETLPAEEKLKMYHSLAGSLQDSGIVLKRVTIHLEDLAPHLDPLAYEKARHQIQSWQGELKLLTSAIGETVTECESRMVQSIDFQTEMSRSLDWLRRVKAELSGPVYLDLNLQDIQEEIRKIQIHQEEVQSSLRIMNALSHKEKEKFTKAKELISADLEHSLAELSELDGDIQEALRTRQATLTEIYSQCQRYYQVFQAANDWLEDAQELLQLAGNGLDVESAEENLKSHMEFFSTEDQFHSNLEELHSLVATLDPLIKPTGKEDLEQKVASLELRSQRMSRDSGAQVDLLQRCTAQWHDYQKAREEVIELMNDTEKKLSEFSLLKTSSSHEAEEKLSEHKALVSVVNSFHEKIVALEEKASQLEKTGNDASKATLSRSMTTVWQRWTRLRAVAQDQEKILEDAVDEWTGFNNKVKKATEMIDQLQDKLPGSSAEKASKAELLTLLEYHDTFVLELEQQQSALGMLRQQTLSMLQDGAAPTPGEEPPLMQEITAMQDRCLNMQEKVKTNGKLVKQELKDREMVETQINSVKCWVQETKEYLGNPTIEIDAQLEELQILLTEATNHRQNIEKMAEEQKEKYLGLYTILPSELSLQLAEVALDLKIRDQIQDKIKEVEQSKATSQELSRQIQKLAKDLTTILTKLKAKTDNVVQAKTDQKVLGEELDGCNSKLMELDAAVQKFLEQNGQLGKPLAKKIGKLTELHQQTIRQAENRLSKLNQAASHLEEYNEMLELILKWIEKAKVLAHGTIAWNSASQLREQYILHQTLLEESKEIDSELEAMTEKLQYLTSVYCTEKMSQQVAELGRETEELRQMIKIRLQNLQDAAKDMKKFEAELKKLQAALEQAQATLTSPEVGRLSLKEQLSHRQHLLSEMESLKPKVQAVQLCQSALRIPEDVVASLPLCHAALRLQEEASRLQHTAIQQCNIMQEAVVQYEQYEQEMKHLQQLIEGAHREIEDKPVATSNIQELQAQISRHEELAQKIKGYQEQIASLNSKCKMLTMKAKHATMLLTVTEVEGLAEGTEDLDGELLPTPSAHPSVVMMTAGRCHTLLSPVTEESGEEGTNSEISSPPACRSPSPVANTDASVNQDIAYYQALSAERLQTDAAKIHPSTSASQEFYEPGLEPSATAKLGDLQRSWETLKNVISEKQRTLYEALERQQKYQDSLQSISTKMEAIELKLSESPEPGRSPESQMAEHQALMDEILMLQDEINELQSSLAEELVSESCEADPAEQLALQSTLTVLAERMSTIRMKASGKRQLLEEKLNDQLEEQRQEQALQRYRCEADELDSWLLSTKATLDTALSPPKEPMDMEAQLMDCQNMLVEIEQKVVALSELSVHNENLLLEGKAHTKDEAEQLAGKLRRLKGSLLELQRALHDKQLNMQGTAQEKEESDVDLTATQSPGVQEWLAQARTTWTQQRQSSLQQQKELEQELAEQKSLLRSVASRGEEILIQHSAAETSGDAGEKPDVLSQELGMEGEKSSAEDQMRMKWESLHQEFSTKQKLLQNVLEQEQEQVLYSRPNRLLSGVPLYKGDVPTQDKSAVTSLLDGLNQAFEEVSSQSGGAKRQSIHLEQKLYDGVSATSTWLDDVEERLFVATALLPEETETCLFNQEILAKDIKEMSEEMDKNKNLFSQAFPENGDNRDVIEDTLGCLLGRLSLLDSVVNQRCHQMKERLQQILNFQNDLKVLFTSLADNKYIILQKLANVFEQPVAEQIEAIQQAEDGLKEFDAGIIELKRRGDKLQVEQPSMQELSKLQDMYDELMMIIGSRRSGLNQNLTLKSQYERALQDLADLLETGQEKMAGDQKIIVSSKEEIQQLLDKHKEYFQGLESHMILTETLFRKIISFAVQKETQFHTELMAQASAVLKRAHKRGVELEYILETWSHLDEDQQELSRQLEVVESSIPSVGLVEENEDRLIDRITLYQHLKSSLNEYQPKLYQVLDDGKRLLISISCSDLESQLNQLGECWLSNTNKMSKELHRLETILKHWTRYQSESADLIHWLQSAKDRLEFWTQQSVTVPQELEMVRDHLNAFLEFSKEVDAQSSLKSSVLSTGNQLLRLKKVDTATLRSELSRIDSQWTDLLTNIPAVQEKLHQLQMDKLPSRHAISEVMSWISLMENVIQKDEDNIKNSIGYKAIHEYLQKYKGFKIDINCKQLTVDFVNQSVLQISSQDVESKRSDKTDFAEQLGAMNKSWQILQGLVTEKIQLLEGLLESWSEYENNVQCLKTWFETQEKRLKQQHRIGDQASVQNALKDCQDLEDLIKAKEKEVEKIEQNGLALIQNKKEDVSSIVMSTLRELGQTWANLDHMVGQLKILLKSVLDQWSSHKVAFDKINSYLMEARYSLSRFRLLTGSLEAVQVQVDNLQNLQDDLEKQERSLQKFGSITNQLLKECHPPVTETLTNTLKEVNMRWNNLLEEIAEQLQSSKALLQLWQRYKDYSKQCASTVQQQEDRTNELLKAATNKDIADDEVATWIQDCNDLLKGLGTVKDSLFFLHELGEQLKQQVDASAASAIQSDQLSLSQHLCALEQALCKQQTSLQAGVLDYETFAKSLEALEAWIVEAEEILQGQDPSHSSDLSTIQERMEELKGQMLKFSSMAPDLDRLNELGYRLPLNDKEIKRMQNLNRHWSLISSQTTERFSKLQSFLLQHQTFLEKCETWMEFLVQTEQKLAVEISGNYQHLLEQQRAHELFQAEMFSRQQILHSIIIDGQRLLEQGQVDDRDEFNLKLTLLSNQWQGVIRRAQQRRGIIDSQIRQWQRYREMAEKLRKWLVEVSYLPMSGLGSVPIPLQQARTLFDEVQFKEKVFLRQQGSYILTVEAGKQLLLSADSGAEAALQAELAEIQEKWKSASMRLEEQKKKLAFLLKDWEKCEKGIADSLEKLRTFKKKLSQSLPDHHEELHAEQMRCKELENAVGSWTDDLTQLSLLKDTLSAYISADDISILNERVELLQRQWEELCHQLSLRRQQIGERLNEWAVFSEKNKELCEWLTQMESKVSQNGDILIEEMIEKLKKDYQEEIAIAQENKIQLQQMGERLAKASHESKASEIEYKLGKVNDRWQHLLDLIAARVKKLKETLVAVQQLDKNMSSLRTWLAHIESELAKPIVYDSCNSEEIQRKLNEQQELQRDIEKHSTGVASVLNLCEVLLHDCDACATDAECDSIQQATRNLDRRWRNICAMSMERRLKIEETWRLWQKFLDDYSRFEDWLKSSERTAAFPSSSGVIYTVAKEELKKFEAFQRQVHECLTQLELINKQYRRLARENRTDSACSLKQMVHEGNQRWDNLQKRVTSILRRLKHFIGQREEFETARDSILVWLTEMDLQLTNIEHFSECDVQAKIKQLKAFQQEISLNHNKIEQIIAQGEQLIEKSEPLDAAIIEEELDELRRYCQEVFGRVERYHKKLIRLPLPDDEHDLSDRELELEDSAALSDLHWHDRSADSLLSPQPSSNLSLSLAQPLRSERSGRDTPASVDSIPLEWDHDYDLSRDLESAMSRALPSEDEEGQDDKDFYLRGAVGLSGDHSALESQIRQLGKALDDSRFQIQQTENIIRSKTPTGPELDTSYKGYMKLLGECSSSIDSVKRLEHKLKEEEESLPGFVNLHSTETQTAGVIDRWELLQAQALSKELRMKQNLQKWQQFNSDLNSIWAWLGDTEEELEQLQRLELSTDIQTIELQIKKLKELQKAVDHRKAIILSINLCSPEFTQADSKESRDLQDRLSQMNGRWDRVCSLLEEWRGLLQDALMQCQGFHEMSHGLLLMLENIDRRKNEIVPIDSNLDAEILQDHHKQLMQIKHELLESQLRVASLQDMSCQLLVNAEGTDCLEAKEKVHVIGNRLKLLLKEVSRHIKELEKLLDVSSSQQDLSSWSSADELDTSGSVSPTSGRSTPNRQKTPRGKCSLSQPGPSVSSPHSRSTKGGSDSSLSEPGPGRSGRGFLFRVLRAALPLQLLLLLLIGLACLVPMSEEDYSCALSNNFARSFHPMLRYTNGPPPL.

Residues Met1–Ser289 form an actin-binding region. Residues Met1–Arg8746 lie on the Cytoplasmic side of the membrane. Calponin-homology (CH) domains are found at residues Ile27–Gln134 and Gly178–Pro283. 52 Spectrin repeats span residues Arg314–Phe397, Asp398–Lys502, Met503–Glu609, Glu610–Ala703, Asp704–Ile815, Pro816–Glu923, Thr924–Ile1024, Asp1025–Asp1122, Pro1123–Glu1246, Glu1247–Ile1335, Gln1336–Val1444, Lys1445–His1550, Leu1551–Leu1653, Leu1654–Val1763, Val1764–Ser1879, Leu1880–Leu1976, Ala1977–Cys2081, Cys2082–Ser2195, Leu2196–Thr2303, Ala2304–Ala2401, Ser2402–Cys2513, Ala2514–Cys2619, Gln2620–Val2731, Ile2732–Ile2838, Val2839–Val2962, Ala2963–Glu3062, Gln3063–Leu3171, Lys3172–Leu3275, Asp3276–Ala3387, Leu3388–Leu3490, Val3491–Phe3593, Asn3594–Trp3720, Tyr3721–Gly3814, Leu3815–Lys3920, Val3921–Tyr4028, Gln4029–Lys4139, Ser4140–Asp4235, Leu4236–Ser4339, Val4340–Ala4451, Leu4452–Asn4560, Leu4561–Ala4669, Ile4670–Thr4776, Thr4777–Arg4882, Met4883–Ile4991, Tyr4992–Cys5099, Thr5100–Ala5209, Val5210–Val5318, Lys5319–Lys5424, Ala5425–Leu5522, Asn5523–Ala5630, Ala5631–Ala5736, and Val5737–His5842. A coiled-coil region spans residues Arg314–Gln8666. The residue at position 732 (Ser732) is a Phosphoserine. A Phosphothreonine modification is found at Thr2270. Ser5657 carries the post-translational modification Phosphoserine. The tract at residues Pro5859–Ala5886 is disordered. Spectrin repeat units lie at residues Leu5962–Lys6071, Leu6072–Glu6178, Arg6374–Gln6485, Ile6486–Leu6581, Asn6582–Trp6691, Ser6692–Lys6795, His6796–Leu6902, His6903–Leu7020, Leu7021–Val7128, Leu7129–Leu7237, Leu7238–Gly7350, Val7351–Phe7454, Leu7455–Ile7558, Asp7559–Leu7671, Leu7672–Ala7783, Val7784–Thr7883, Leu7884–Thr7997, Trp7998–Phe8106, and Ile8107–Pro8216. Position 8223 is a phosphoserine (Ser8223). Residues Asp8246–Asp8279 form a disordered region. The span at Ser8247–Leu8265 shows a compositional bias: low complexity. Thr8274 is modified (phosphothreonine). A phosphoserine mark is found at Ser8277, Ser8280, and Ser8305. Spectrin repeat units lie at residues Ser8329–Asn8438, Leu8439–Ala8548, and Leu8549–Gln8666. Thr8360 is modified (phosphothreonine). A disordered region spans residues Ser8671 to Gly8734. 2 stretches are compositionally biased toward polar residues: residues Thr8680–Gln8696 and Ser8704–Ser8729. A KASH domain is found at Arg8738–Leu8797. A helical; Anchor for type IV membrane protein membrane pass occupies residues Ala8747–Met8767. Residues Ser8768–Leu8797 lie on the Perinuclear space side of the membrane.

It belongs to the nesprin family. In terms of assembly, core component of LINC complexes which are composed of inner nuclear membrane SUN domain-containing proteins coupled to outer nuclear membrane KASH domain-containing nesprins. SUN and KASH domain-containing proteins seem to bind each other promiscuously; however, differentially expression of LINC complex constituents can give rise to specific assemblies. At least SUN1/2-containing core LINC complexes are proposed to be hexameric composed of three protomers of each KASH and SUN domain-containing protein. The SUN2:SYNE1/KASH1 LINC complex is a heterohexamer; the homotrimeric cloverleave-like conformation of the SUN domain is a prerequisite for LINC complex formation in which three separate SYNE1/KASH1 peptides bind at the interface of adjacent SUN domains. Self-associates. Interacts with SYNE3. Interacts with SPAG4/SUN4. May interact with MUSK. Interacts with F-actin via its N-terminal domain. Interacts with EMD and LMNA in vitro. Interacts (via KASH domain) with TMEM258. Post-translationally, the disulfid bond with SUN1 or SUN2 is required for stability of the respective LINC complex under tensile forces. In terms of tissue distribution, expressed in HeLa, A431, A172 and HaCaT cells (at protein level). Widely expressed. Highly expressed in skeletal and smooth muscles, heart, spleen, peripheral blood leukocytes, pancreas, cerebellum, stomach, kidney and placenta. Isoform GSRP-56 is predominantly expressed in heart and skeletal muscle (at protein level).

The protein localises to the nucleus outer membrane. It localises to the nucleus. It is found in the nucleus envelope. Its subcellular location is the cytoplasm. The protein resides in the cytoskeleton. The protein localises to the myofibril. It localises to the sarcomere. It is found in the golgi apparatus. Functionally, multi-isomeric modular protein which forms a linking network between organelles and the actin cytoskeleton to maintain the subcellular spatial organization. As a component of the LINC (LInker of Nucleoskeleton and Cytoskeleton) complex involved in the connection between the nuclear lamina and the cytoskeleton. The nucleocytoplasmic interactions established by the LINC complex play an important role in the transmission of mechanical forces across the nuclear envelope and in nuclear movement and positioning. May be involved in nucleus-centrosome attachment and nuclear migration in neural progenitors implicating LINC complex association with SUN1/2 and probably association with cytoplasmic dynein-dynactin motor complexes; SYNE1 and SYNE2 may act redundantly. Required for centrosome migration to the apical cell surface during early ciliogenesis. May be involved in nuclear remodeling during sperm head formation in spermatogenesis; a probable SUN3:SYNE1/KASH1 LINC complex may tether spermatid nuclei to posterior cytoskeletal structures such as the manchette. The protein is Nesprin-1 of Homo sapiens (Human).